We begin with the raw amino-acid sequence, 667 residues long: Putative L-type lectin-domain containing receptor kinase I.4 (667 aa).

An N-terminal signal peptide occupies residues 1 to 21 (MDCRLHLVLFFSCVCLICLSG). The Extracellular segment spans residues 22-294 (QQETGFVYNG…PREEKKKLHP (273 aa)). Residues 24–257 (ETGFVYNGFH…NQYILGWSFS (234 aa)) are legume-lectin like. 7 N-linked (GlcNAc...) asparagine glycosylation sites follow: Asn55, Asn110, Asn124, Asn128, Asn181, Asn204, and Asn225. A helical transmembrane segment spans residues 295–315 (LLIGLVILLVIPVLMVLGGVY). The Cytoplasmic segment spans residues 316–667 (WYRRKKYAEV…THSILEGYGR (352 aa)). The 276-residue stretch at 350–625 (FVKDALVGKG…QYLSQKQPLP (276 aa)) folds into the Protein kinase domain. ATP contacts are provided by residues 356 to 364 (VGKGGFGKV) and Lys378. The Proton acceptor role is filled by Asp474.

This sequence in the C-terminal section; belongs to the protein kinase superfamily. Ser/Thr protein kinase family. The protein in the N-terminal section; belongs to the leguminous lectin family.

It localises to the cell membrane. It carries out the reaction L-seryl-[protein] + ATP = O-phospho-L-seryl-[protein] + ADP + H(+). The enzyme catalyses L-threonyl-[protein] + ATP = O-phospho-L-threonyl-[protein] + ADP + H(+). In Arabidopsis thaliana (Mouse-ear cress), this protein is Putative L-type lectin-domain containing receptor kinase I.4 (LECRK14).